The sequence spans 1669 residues: MHSKTAPRFLVFLLLTLLLLLAASPVASKGCVCKGKGQCLCAGTKGEKGEKGVPGSPGFPGQKGFPGPEGLPGPQGPKGSPGLPGLTGPKGIRGITGLPGFAGPPGLPGLPGHPGPRGLAGLPGCNGSKGEQGFPGFPGTPGYAGLPGPDGLKGQKGEPAQGEDRGFNGKGDPGPPGVPGFQGFPGLPGFPGPAGPPGPPGFFGLPGAMGPRGPKGHMGDSVIGQKGERGMKGLTGPPGPPGTVIFTLTQPYNKSDFKGEKGDEGERGEPGPPGPSGPPGDSYGSEKGAPGEPGPRGKPGKDGAPGFPGTEGAKGNRGFPGLRGEAGIKGRKGDIGPPGFPGPTEYYDAYLEKGERGMPGLPGPKGARGPQGPSGPPGVPGSPGLSRPGLRGPIGWPGLKGSKGERGPPGKDTVGPPGPLGCPGSPGPPGPPGPPGCPGDIVFKCSPGEHGMPGDTGPPGVPGLDGPKGEPGSPCTECHCFPGPPGVPGFPGLDGIKGIPGGRGVPGLKGNPGSPGSAGLPGFAGFPGDQGHPGLKGDKGDTPLPWGQVGNPGDPGLRGLPGRKGFDGTPGGPGAKGPPGPQGEPALSGRKGDQGPPGPPGFPGPPGPAGPAGPPGYGPQGEPGPKGAQGVPGVLGPPGEAGLKGEPSTSTPDLGPPGPPGPPGQAGPRGLPGLPGPVGKCDPGLPGPDGEPGIPEAGCPGPPGPKGNQGFPGTKGSPGCPGEMGKPGRPGEPGIPGAKGEPSVGRPGKPGKPGFPGERGNAGENGDIGLPGLPGLPGTPGRGGLDGPPGDPGQPGSPGAKGSPGRCIPGPRGTQGLPGLNGLKGQPGRRGDTGPKGDPGIPGMDRSGVPGDPGPPGTPGCPGEMGPPGQKGYPGAPGFPGPPGEKGEVGMMGYPGTTGPPGLPGKPGSQGQRGSLGIPGMKGEKGRPGAKGERGEKGKPGPSQTTLLKGDKGEPGLKGFVGNPGEKGNRGNPGLPGPKGLEGLPGLPGPPGPRGDTGSRGNPGRPGPHGMPGSMGIMGVPGPKGRKGTSGLPGLAGRPGLTGIHGPQGDKGEPGYSEGARPGPPGPKGDPGLPGDKGKKGERGVPGPPGQSGPAGPDGAPGSPGSPGHPGKPGPAGDLGLKGQKGFPGPPGSTGPPGPPGLPGLPGPMGMRGDQGRDGIPGPPGEKGETGLLGAYPGPKGSPGVPGAKGDRGVPGLSGLPGRKGVMGDVGPQGPPGTAGLPGPPGLPGAIIPGPKGDRGLPGLRGNPGEPGPPGPPGPIGKGIKGDKGFMGPPGPKGLPGTVGDMGPPGFPGAPGTPGLPGVRGDPGFPGFPGIKGEKGNPGFLGPIGHPGPVGPKGPPGPRGKPGTLKVISLPGSPGPPGVPGQPGMKGDPGPLGLPGIPGPCGPRGKPGKDGKPGTPGPAGTKGNKGLKGQQGPPGLDGLPGLKGNPGDRGTPATGTRMRGFIFTRHSQTTAIPSCPEGTQPLYSGFSLLFVQGNKRAHGQDLGTLGSCLQRFTTMPFLFCNINNVCNFASRNDYSYWLSTPALMPMDMAPISGRALEPYISRCTVCEGPAMAIAVHSQTTAIPPCPQDWVSLWKGFSFIMFTSAGSEGAGQALASPGSCLEEFRASPFIECHGRGTCNYYSNSYSFWLASLNPERMFRKPIPSTVKAGDLEKIISRCQVCMKKRH.

An N-terminal signal peptide occupies residues 1 to 28 (MHSKTAPRFLVFLLLTLLLLLAASPVAS). The 7S domain stretch occupies residues 29–42 (KGCVCKGKGQCLCA). The interval 43 to 1436 (GTKGEKGEKG…KGNPGDRGTP (1394 aa)) is triple-helical region. 2 disordered regions span residues 44 to 473 (TKGE…EPGS) and 500 to 1439 (PGGR…PATG). Residues 54 to 68 (PGSPGFPGQKGFPGP) are compositionally biased toward low complexity. Residues 105-114 (PGLPGLPGHP) show a composition bias toward pro residues. N126 carries an N-linked (GlcNAc...) asparagine glycan. Positions 188 to 200 (PGFPGPAGPPGPP) are enriched in pro residues. Residues 202-211 (FFGLPGAMGP) show a composition bias toward low complexity. N-linked (GlcNAc...) asparagine glycosylation occurs at N253. Residues 255–269 (SDFKGEKGDEGERGE) show a composition bias toward basic and acidic residues. Composition is skewed to low complexity over residues 279–290 (PGDSYGSEKGAP) and 382–393 (SPGLSRPGLRGP). A compositionally biased stretch (pro residues) spans 416 to 437 (PPGPLGCPGSPGPPGPPGPPGC). Residues 551–560 (NPGDPGLRGL) show a composition bias toward low complexity. 2 stretches are compositionally biased toward pro residues: residues 596–617 (PPGPPGFPGPPGPAGPAGPPGY) and 654–665 (LGPPGPPGPPGQ). Over residues 666-684 (AGPRGLPGLPGPVGKCDPG) the composition is skewed to low complexity. Positions 778 to 787 (GTPGRGGLDG) are enriched in gly residues. The Cell attachment site motif lies at 830–832 (RGD). A compositionally biased stretch (low complexity) spans 861-876 (CPGEMGPPGQKGYPGA). Residues 922–939 (KGEKGRPGAKGERGEKGK) are compositionally biased toward basic and acidic residues. Positions 970 to 985 (RGNPGLPGPKGLEGLP) are enriched in low complexity. Positions 994-996 (RGD) match the Cell attachment site motif. Residues 1092–1103 (SGPAGPDGAPGS) are compositionally biased toward low complexity. Residues 1128–1146 (PGPPGSTGPPGPPGLPGLP) show a composition bias toward pro residues. A Cell attachment site motif is present at residues 1152 to 1154 (RGD). The segment covering 1228–1248 (PGAIIPGPKGDRGLPGLRGNP) has biased composition (low complexity). Residues 1250 to 1259 (EPGPPGPPGP) are compositionally biased toward pro residues. Residues 1304-1306 (RGD) carry the Cell attachment site motif. Pro residues predominate over residues 1333 to 1343 (PVGPKGPPGPR). 2 stretches are compositionally biased toward low complexity: residues 1366-1379 (QPGMKGDPGPLGLP) and 1402-1429 (PAGTKGNKGLKGQQGPPGLDGLPGLKGN). Residues 1425-1443 (GLKGNPGDRGTPATGTRMR) form an epitope recognized by Goodpasture antibodies region. The region spanning 1444–1668 (GFIFTRHSQT…SRCQVCMKKR (225 aa)) is the Collagen IV NC1 domain. 6 disulfide bridges follow: C1459-C1550, C1492-C1547, C1504-C1510, C1569-C1664, C1603-C1661, and C1615-C1621. The tract at residues 1478 to 1556 (NKRAHGQDLG…CTVCEGPAMA (79 aa)) is required for the anti-angiogenic activity of tumstatin. M1532 participates in a covalent cross-link: S-Lysyl-methionine sulfilimine (Met-Lys) (interchain with K-1650). The tract at residues 1609–1627 (ASPFIECHGRGTCNYYSNS) is required for the anti-tumor cell activity of tumstatin. K1650 is covalently cross-linked (S-Lysyl-methionine sulfilimine (Lys-Met) (interchain with M-1532)).

This sequence belongs to the type IV collagen family. As to quaternary structure, there are six type IV collagen isoforms, alpha 1(IV)-alpha 6(IV), each of which can form a triple helix structure with 2 other chains to generate type IV collagen network. The alpha 3(IV) chain forms a triple helical protomer with alpha 4(IV) and alpha 5(IV); this triple helical structure dimerizes through NC1-NC1 domain interactions such that the alpha 3(IV), alpha 4(IV) and alpha 5(IV) chains of one protomer connect with the alpha 5(IV), alpha 4(IV) and alpha 3(IV) chains of the opposite promoter, respectively. Interacts with ITGB3. Associates with LAMB2 at the neuromuscular junction and in GBM. In terms of processing, prolines at the third position of the tripeptide repeating unit (G-X-Y) are hydroxylated in some or all of the chains. Type IV collagens contain numerous cysteine residues which are involved in inter- and intramolecular disulfide bonding. 12 of these, located in the NC1 domain, are conserved in all known type IV collagens. Post-translationally, the trimeric structure of the NC1 domains is stabilized by covalent bonds between Lys and Met residues. In terms of processing, phosphorylated. Thought to be phosphorylated by CERT, but CERT does not have kinase activity. In terms of tissue distribution, highly expressed in kidney and lung. Detected at lower levels in heart, muscle and skin.

The protein resides in the secreted. Its subcellular location is the extracellular space. It is found in the extracellular matrix. The protein localises to the basement membrane. In terms of biological role, type IV collagen is the major structural component of glomerular basement membranes (GBM), forming a 'chicken-wire' meshwork together with laminins, proteoglycans and entactin/nidogen. Functionally, tumstatin, a cleavage fragment corresponding to the collagen alpha 3(IV) NC1 domain, possesses both anti-angiogenic and anti-tumor cell activity; these two anti-tumor properties may be regulated via RGD-independent ITGB3-mediated mechanisms. The sequence is that of Collagen alpha-3(IV) chain from Mus musculus (Mouse).